Here is a 371-residue protein sequence, read N- to C-terminus: Peptide chain release factor 2 (371 aa).

Gln252 is modified (N5-methylglutamine).

Belongs to the prokaryotic/mitochondrial release factor family. Methylated by PrmC. Methylation increases the termination efficiency of RF2.

The protein localises to the cytoplasm. In terms of biological role, peptide chain release factor 2 directs the termination of translation in response to the peptide chain termination codons UGA and UAA. The chain is Peptide chain release factor 2 from Staphylococcus epidermidis (strain ATCC 35984 / DSM 28319 / BCRC 17069 / CCUG 31568 / BM 3577 / RP62A).